Consider the following 437-residue polypeptide: 26S proteasome regulatory subunit 4 homolog (437 aa).

The segment at 1-47 is disordered; sequence MGQGVSSGQDKKKKKGSNQKPKYEPPVQSKFGRKKRKGGPATAEKLP. A lipid anchor (N-myristoyl glycine) is attached at glycine 2. ATP is bound at residue 223–230; the sequence is GAPGTGKT. Glycyl lysine isopeptide (Lys-Gly) (interchain with G-Cter in ubiquitin) cross-links involve residues lysine 234, lysine 255, and lysine 290.

It belongs to the AAA ATPase family.

The protein localises to the cytoplasm. It is found in the nucleus. The 26S proteasome is involved in the ATP-dependent degradation of ubiquitinated proteins. The regulatory (or ATPase) complex confers ATP dependency and substrate specificity to the 26S complex. Has ATPase activity. This chain is 26S proteasome regulatory subunit 4 homolog (RPT2), found in Saccharomyces cerevisiae (strain ATCC 204508 / S288c) (Baker's yeast).